The primary structure comprises 428 residues: Endoplasmic reticulum junction formation protein lunapark (428 aa).

Gly-2 is lipidated: N-myristoyl glycine. The Cytoplasmic segment spans residues 2 to 45 (GGLFSRWRTKPSTVEVLESIDKEIQALEEFREKNQRLQKLWVGR). A coiled-coil region spans residues 16–41 (EVLESIDKEIQALEEFREKNQRLQKL). The helical transmembrane segment at 46 to 66 (LILYSSVLYLFTCLIVYLWYL) threads the bilayer. At 67–77 (PDEFTARLAMT) the chain is on the lumenal side. The chain crosses the membrane as a helical span at residues 78-98 (LPFFAFPLIIWSIRTVIIFFF). Topologically, residues 99–428 (SKRTERNNEA…ELSGESLTAE (330 aa)) are cytoplasmic. Positions 102–128 (TERNNEALDDLKSQRKKILEEVMEKET) form a coiled coil. Residues Ser-114, Ser-153, Ser-177, Ser-182, and Ser-194 each carry the phosphoserine modification. The disordered stretch occupies residues 143–247 (SKKAKECEPP…HPPGPPLARP (105 aa)). Pro residues predominate over residues 185-198 (QGPPPQVPVSPGPP). Phosphothreonine occurs at positions 211 and 213. Phosphoserine occurs at positions 217 and 227. Residues 276-301 (CQQCFSHNGMALKEEFEYIAFRCAYC) form a C4-type; plays a role in ER morphology zinc finger. Phosphoserine is present on residues Ser-321, Ser-353, and Ser-384. The tract at residues 356–428 (HDVLDDNTEQ…ELSGESLTAE (73 aa)) is disordered. Residues 386–401 (SEEPEEKQETENEEAS) show a composition bias toward acidic residues. Ser-414 bears the Phosphoserine mark.

The protein belongs to the lunapark family. As to quaternary structure, homodimer; homodimerization requires the C4-type zinc finger motif and decreases during mitosis in a phosphorylation-dependent manner. Post-translationally, myristoylated; myristoylation is necessary for the endoplasmic reticulum (ER) three-way ER tubular junction formation, but is not required neither for membrane translocation, membrane topology formation, nor for the specific localization to ER membranes. In terms of processing, phosphorylated. Phosphorylation occurs at Ser-177, Ser-182, Ser-217, Ser-227, Ser-321 and Ser-384 during interphase. Phosphorylation occurs at Ser-114, Ser-153, Ser-194, Thr-211 and Ser-353 during mitosis; these phosphorylations reduce both its homodimerization and the ER three-way tubular junction formation. Subject to proteasomal degradation following phosphorylation during mitosis. Expressed in neural precursor cells, where it is detected at the growth-cone-like structure and branching sites of neurite-like processes.

Its subcellular location is the endoplasmic reticulum membrane. Endoplasmic reticulum (ER)-shaping membrane protein that plays a role in determining ER morphology. Involved in the stabilization of nascent three-way ER tubular junctions within the ER network. May also play a role as a curvature-stabilizing protein within the three-way ER tubular junction network. May be involved in limb development. Is involved in central nervous system development. The sequence is that of Endoplasmic reticulum junction formation protein lunapark from Homo sapiens (Human).